We begin with the raw amino-acid sequence, 69 residues long: DNA-directed RNA polymerase subunit omega (69 aa).

This sequence belongs to the RNA polymerase subunit omega family. The RNAP catalytic core consists of 2 alpha, 1 beta, 1 beta' and 1 omega subunit. When a sigma factor is associated with the core the holoenzyme is formed, which can initiate transcription.

It carries out the reaction RNA(n) + a ribonucleoside 5'-triphosphate = RNA(n+1) + diphosphate. In terms of biological role, promotes RNA polymerase assembly. Latches the N- and C-terminal regions of the beta' subunit thereby facilitating its interaction with the beta and alpha subunits. The polypeptide is DNA-directed RNA polymerase subunit omega (Exiguobacterium sp. (strain ATCC BAA-1283 / AT1b)).